Consider the following 270-residue polypeptide: Phosphatidylglycerol--prolipoprotein diacylglyceryl transferase (270 aa).

A run of 4 helical transmembrane segments spans residues 19–39 (FPVY…LWLA), 54–74 (IDLV…YYVI), 92–112 (QGGL…ILFA), and 116–136 (GLSF…GQAI). Arg-138 contacts a 1,2-diacyl-sn-glycero-3-phospho-(1'-sn-glycerol). 3 helical membrane-spanning segments follow: residues 178-198 (HPTF…LLAL), 206-226 (GELF…VEGL), and 236-256 (LRIA…FIIV).

This sequence belongs to the Lgt family.

The protein resides in the cell membrane. The catalysed reaction is L-cysteinyl-[prolipoprotein] + a 1,2-diacyl-sn-glycero-3-phospho-(1'-sn-glycerol) = an S-1,2-diacyl-sn-glyceryl-L-cysteinyl-[prolipoprotein] + sn-glycerol 1-phosphate + H(+). It functions in the pathway protein modification; lipoprotein biosynthesis (diacylglyceryl transfer). In terms of biological role, catalyzes the transfer of the diacylglyceryl group from phosphatidylglycerol to the sulfhydryl group of the N-terminal cysteine of a prolipoprotein, the first step in the formation of mature lipoproteins. The chain is Phosphatidylglycerol--prolipoprotein diacylglyceryl transferase from Bacillus mycoides (strain KBAB4) (Bacillus weihenstephanensis).